The sequence spans 691 residues: Gex-3-interacting protein 13 (691 aa).

Disordered regions lie at residues 18 to 97 (TASL…SAHL) and 171 to 195 (PASP…KRQR). A compositionally biased stretch (low complexity) spans 31-46 (SSFTTTSESTSPPYSS). Residues 47–57 (SEHHSPTDQRT) are compositionally biased toward basic and acidic residues. The span at 58-79 (ETPTSDSGNASFSPENVATSFE) shows a compositional bias: polar residues. The span at 171–183 (PASPCTTAASAPS) shows a compositional bias: low complexity. 2 BED-type zinc fingers span residues 194-242 (QRRN…YEKV) and 424-473 (LRRH…YEKV). The Zn(2+) site is built by Cys212, Cys215, His230, His235, Cys443, Cys446, His461, and His466.

In terms of assembly, interacts with gex-3.

The sequence is that of Gex-3-interacting protein 13 (gei-13) from Caenorhabditis elegans.